Here is a 171-residue protein sequence, read N- to C-terminus: uncharacterized protein (171 aa).

This is an uncharacterized protein from Orgyia pseudotsugata multicapsid polyhedrosis virus (OpMNPV).